Here is a 568-residue protein sequence, read N- to C-terminus: 3-(3-hydroxy-phenyl)propionate/3-hydroxycinnamic acid hydroxylase (568 aa).

Residues 13-42 and 278-288 each bind FAD; these read DVVI…IVEE and FRKGRMFLAGD.

This sequence belongs to the PheA/TfdB FAD monooxygenase family. The cofactor is FAD.

It catalyses the reaction 3-(3-hydroxyphenyl)propanoate + NADH + O2 + H(+) = 3-(2,3-dihydroxyphenyl)propanoate + NAD(+) + H2O. The catalysed reaction is (2E)-3-(3-hydroxyphenyl)prop-2-enoate + NADH + O2 + H(+) = (2E)-3-(2,3-dihydroxyphenyl)prop-2-enoate + NAD(+) + H2O. Its pathway is aromatic compound metabolism; 3-phenylpropanoate degradation. Its function is as follows. Catalyzes the insertion of one atom of molecular oxygen into position 2 of the phenyl ring of 3-(3-hydroxyphenyl)propionate (3-HPP) and hydroxycinnamic acid (3HCI). In Mycobacterium sp. (strain JLS), this protein is 3-(3-hydroxy-phenyl)propionate/3-hydroxycinnamic acid hydroxylase.